Here is a 430-residue protein sequence, read N- to C-terminus: Serine--tRNA ligase (430 aa).

237–239 (TAE) is a binding site for L-serine. 268-270 (RSE) contacts ATP. Glu291 is a binding site for L-serine. 355–358 (EISS) contacts ATP. Ser391 serves as a coordination point for L-serine.

The protein belongs to the class-II aminoacyl-tRNA synthetase family. Type-1 seryl-tRNA synthetase subfamily. Homodimer. The tRNA molecule binds across the dimer.

It is found in the cytoplasm. It catalyses the reaction tRNA(Ser) + L-serine + ATP = L-seryl-tRNA(Ser) + AMP + diphosphate + H(+). It carries out the reaction tRNA(Sec) + L-serine + ATP = L-seryl-tRNA(Sec) + AMP + diphosphate + H(+). Its pathway is aminoacyl-tRNA biosynthesis; selenocysteinyl-tRNA(Sec) biosynthesis; L-seryl-tRNA(Sec) from L-serine and tRNA(Sec): step 1/1. In terms of biological role, catalyzes the attachment of serine to tRNA(Ser). Is also able to aminoacylate tRNA(Sec) with serine, to form the misacylated tRNA L-seryl-tRNA(Sec), which will be further converted into selenocysteinyl-tRNA(Sec). The sequence is that of Serine--tRNA ligase from Salmonella enteritidis PT4 (strain P125109).